A 198-amino-acid polypeptide reads, in one-letter code: Glycerol-3-phosphate acyltransferase (198 aa).

The next 5 membrane-spanning stretches (helical) occupy residues 6 to 26 (FLPV…GLIL), 55 to 75 (GLAA…VIIS), 83 to 103 (AAMI…WLKF), 113 to 133 (IGIL…VWLA), and 154 to 174 (IVLW…LTLL).

This sequence belongs to the PlsY family. As to quaternary structure, probably interacts with PlsX.

The protein localises to the cell inner membrane. The enzyme catalyses an acyl phosphate + sn-glycerol 3-phosphate = a 1-acyl-sn-glycero-3-phosphate + phosphate. Its pathway is lipid metabolism; phospholipid metabolism. Functionally, catalyzes the transfer of an acyl group from acyl-phosphate (acyl-PO(4)) to glycerol-3-phosphate (G3P) to form lysophosphatidic acid (LPA). This enzyme utilizes acyl-phosphate as fatty acyl donor, but not acyl-CoA or acyl-ACP. This is Glycerol-3-phosphate acyltransferase from Bradyrhizobium sp. (strain BTAi1 / ATCC BAA-1182).